Here is a 967-residue protein sequence, read N- to C-terminus: Isoleucine--tRNA ligase 2 (967 aa).

The 'HIGH' region signature appears at 58-68 (PYANGDIHIGH). Residues 437–446 (AVTEEAGATG) show a composition bias toward low complexity. Positions 437 to 466 (AVTEEAGATGEARKVGKAEEAEEAGPAKTL) are disordered. Glutamate 598 is an L-isoleucyl-5'-AMP binding site. Residues 639 to 643 (KMSKS) carry the 'KMSKS' region motif. Residue lysine 642 participates in ATP binding. Zn(2+)-binding residues include cysteine 922, cysteine 925, cysteine 942, and cysteine 945.

Belongs to the class-I aminoacyl-tRNA synthetase family. IleS type 1 subfamily. Monomer. Requires Zn(2+) as cofactor.

The protein localises to the cytoplasm. It carries out the reaction tRNA(Ile) + L-isoleucine + ATP = L-isoleucyl-tRNA(Ile) + AMP + diphosphate. In terms of biological role, catalyzes the attachment of isoleucine to tRNA(Ile). As IleRS can inadvertently accommodate and process structurally similar amino acids such as valine, to avoid such errors it has two additional distinct tRNA(Ile)-dependent editing activities. One activity is designated as 'pretransfer' editing and involves the hydrolysis of activated Val-AMP. The other activity is designated 'posttransfer' editing and involves deacylation of mischarged Val-tRNA(Ile). The polypeptide is Isoleucine--tRNA ligase 2 (Burkholderia mallei (strain ATCC 23344)).